A 360-amino-acid chain; its full sequence is Protein-glutamate methylesterase/protein-glutamine glutaminase 3 (360 aa).

Residues 14–131 (RVLVIDDSAT…AEGVQAYAEE (118 aa)) enclose the Response regulatory domain. Aspartate 65 is subject to 4-aspartylphosphate. One can recognise a CheB-type methylesterase domain in the interval 169-360 (AGKDGRVVAV…AGKLMELDGA (192 aa)). Active-site residues include serine 181, histidine 207, and aspartate 303.

Belongs to the CheB family. Phosphorylated by CheA. Phosphorylation of the N-terminal regulatory domain activates the methylesterase activity.

It is found in the cytoplasm. It catalyses the reaction [protein]-L-glutamate 5-O-methyl ester + H2O = L-glutamyl-[protein] + methanol + H(+). The enzyme catalyses L-glutaminyl-[protein] + H2O = L-glutamyl-[protein] + NH4(+). In terms of biological role, involved in chemotaxis. Part of a chemotaxis signal transduction system that modulates chemotaxis in response to various stimuli. Catalyzes the demethylation of specific methylglutamate residues introduced into the chemoreceptors (methyl-accepting chemotaxis proteins or MCP) by CheR. Also mediates the irreversible deamidation of specific glutamine residues to glutamic acid. The protein is Protein-glutamate methylesterase/protein-glutamine glutaminase 3 of Burkholderia thailandensis (strain ATCC 700388 / DSM 13276 / CCUG 48851 / CIP 106301 / E264).